A 449-amino-acid chain; its full sequence is UDP-N-acetylglucosamine 1-carboxyvinyltransferase (449 aa).

51-52 (KN) is a binding site for phosphoenolpyruvate. Arg121 provides a ligand contact to UDP-N-acetyl-alpha-D-glucosamine. Residue Cys145 is the Proton donor of the active site. Cys145 carries the 2-(S-cysteinyl)pyruvic acid O-phosphothioketal modification. Residues 150-154 (RPVDQ), Asp333, and Ile355 each bind UDP-N-acetyl-alpha-D-glucosamine.

The protein belongs to the EPSP synthase family. MurA subfamily.

It is found in the cytoplasm. It catalyses the reaction phosphoenolpyruvate + UDP-N-acetyl-alpha-D-glucosamine = UDP-N-acetyl-3-O-(1-carboxyvinyl)-alpha-D-glucosamine + phosphate. It participates in cell wall biogenesis; peptidoglycan biosynthesis. Cell wall formation. Adds enolpyruvyl to UDP-N-acetylglucosamine. This chain is UDP-N-acetylglucosamine 1-carboxyvinyltransferase, found in Burkholderia lata (strain ATCC 17760 / DSM 23089 / LMG 22485 / NCIMB 9086 / R18194 / 383).